We begin with the raw amino-acid sequence, 694 residues long: Outer dynein arm-docking complex subunit 1 (694 aa).

Coiled-coil stretches lie at residues 27–192 (ELSR…RYLN) and 222–259 (REEAKTKMGMLQERAEKELAQSDTEAQILLRQISHLEQ). The interval 271 to 290 (RQPDPGVVQKEEQRAWETSE) is disordered. The stretch at 339–418 (NFINEQNSEL…EKIKTDIQVL (80 aa)) forms a coiled coil. Disordered regions lie at residues 531-550 (QDEEGSPKKRDSSPSLTLSS) and 571-694 (SILS…RGYN). Phosphoserine occurs at positions 536, 542, 543, and 545. The segment covering 628 to 642 (TSSSSYLGSTGYLET) has biased composition (low complexity). The span at 655 to 672 (SQSMGSEMSRGFSSGSGQ) shows a compositional bias: polar residues. Residues 673 to 687 (TSSAAPASRPSSATS) are compositionally biased toward low complexity.

This sequence belongs to the ODA1/DCC2 family. In terms of assembly, component of the outer dynein arm-docking complex along with ODAD2, ODAD3, ODAD4 and CLXN. Interacts with ODAD3. Interacts with ODAD4; this interaction may facilitate the recruitment and/or attachment of outer dynein arm docking complex proteins,including ODAD1, ODAD3, and ODAD4 to ciliary axonemes. Interacts with DNAH9. Interacts with MNS1. Interacts with PIERCE1 and PIERCE2; the interactions link the outer dynein arms docking complex (ODA-DC) to the internal microtubule inner proteins (MIP) in cilium axoneme.

The protein resides in the cytoplasm. It localises to the cytoskeleton. The protein localises to the cilium axoneme. Functionally, component of the outer dynein arm-docking complex that mediates outer dynein arms (ODA) binding onto the doublet microtubule. Involved in mediating assembly of both ODAs and their axonemal docking complex onto ciliary microtubules. This is Outer dynein arm-docking complex subunit 1 (Odad1) from Rattus norvegicus (Rat).